The following is a 118-amino-acid chain: Phospholipase A2 'basic' (118 aa).

Cystine bridges form between Cys11–Cys70, Cys26–Cys117, Cys28–Cys44, Cys43–Cys98, Cys50–Cys91, Cys59–Cys84, and Cys77–Cys89. Ca(2+)-binding residues include Tyr27, Gly29, and Gly31. The active site involves His47. Ca(2+) is bound at residue Asp48. Positions 52–69 match the Coagulation factor Xa binding motif motif; that stretch reads EKAGKMGCWPYLTLYKYK. Residue Asp92 is part of the active site.

This sequence belongs to the phospholipase A2 family. Group I subfamily. D49 sub-subfamily. Ca(2+) serves as cofactor. As to expression, expressed by the venom gland.

The protein localises to the secreted. It carries out the reaction a 1,2-diacyl-sn-glycero-3-phosphocholine + H2O = a 1-acyl-sn-glycero-3-phosphocholine + a fatty acid + H(+). In terms of biological role, snake venom phospholipase A2 (PLA2) that shows strong anticoagulant activity. Binds directly with the coagulation factor FXa (F10) and blocks the formation of the prothombinase complex. Acts by a nonenzymatic mechanism. Also inhibits the complex composed of tissue factor (F3) and coagulation factor VIIa (F7) (TF-VIIa complex) by both enzymatic and nonenzymatic mechanisms. PLA2 catalyzes the calcium-dependent hydrolysis of the 2-acyl groups in 3-sn-phosphoglycerides. The sequence is that of Phospholipase A2 'basic' from Naja nigricollis (Black-necked spitting cobra).